A 138-amino-acid polypeptide reads, in one-letter code: Putative pre-16S rRNA nuclease (138 aa).

Belongs to the YqgF nuclease family.

The protein resides in the cytoplasm. In terms of biological role, could be a nuclease involved in processing of the 5'-end of pre-16S rRNA. In Azobacteroides pseudotrichonymphae genomovar. CFP2, this protein is Putative pre-16S rRNA nuclease.